The chain runs to 398 residues: Subtilisin-like protease CPC735_015300 (398 aa).

A signal peptide spans M1–A19. A propeptide spanning residues A20 to T116 is cleaved from the precursor. In terms of domain architecture, Inhibitor I9 spans Q35–L115. A Peptidase S8 domain is found at T126–Q398. Catalysis depends on charge relay system residues D158 and H189. N250 carries an N-linked (GlcNAc...) asparagine glycan. S344 (charge relay system) is an active-site residue. N-linked (GlcNAc...) asparagine glycosylation is present at N362.

This sequence belongs to the peptidase S8 family.

The protein localises to the secreted. Functionally, secreted subtilisin-like serine protease with keratinolytic activity that contributes to pathogenicity. The polypeptide is Subtilisin-like protease CPC735_015300 (Coccidioides posadasii (strain C735) (Valley fever fungus)).